We begin with the raw amino-acid sequence, 561 residues long: Urocanate hydratase (561 aa).

NAD(+) contacts are provided by residues 52-53, Gln-130, 176-178, Glu-196, Arg-201, 242-243, 263-267, 273-274, and Tyr-322; these read GG, GMG, NA, QTSAH, and YL. Residue Cys-410 is part of the active site. Gly-492 provides a ligand contact to NAD(+).

Belongs to the urocanase family. NAD(+) is required as a cofactor.

It localises to the cytoplasm. It catalyses the reaction 4-imidazolone-5-propanoate = trans-urocanate + H2O. Its pathway is amino-acid degradation; L-histidine degradation into L-glutamate; N-formimidoyl-L-glutamate from L-histidine: step 2/3. In terms of biological role, catalyzes the conversion of urocanate to 4-imidazolone-5-propionate. The protein is Urocanate hydratase of Salmonella typhi.